The primary structure comprises 540 residues: Raucaffricine-O-beta-D-glucosidase (540 aa).

A beta-D-glucoside contacts are provided by residues glutamine 36, histidine 140, and 185–186; that span reads NE. Residue glutamate 186 is the Proton donor of the active site. Cysteines 221 and 230 form a disulfide. A beta-D-glucoside contacts are provided by residues tyrosine 347, glutamate 420, tryptophan 469, 476-477, and phenylalanine 485; that span reads EW. Residue glutamate 420 is the Nucleophile of the active site.

This sequence belongs to the glycosyl hydrolase 1 family.

It carries out the reaction raucaffricine + H2O = vomilenine + D-glucose. The catalysed reaction is vomilenine + UDP-alpha-D-glucose = raucaffricine + UDP + H(+). Glucosidase specifically involved in alkaloid biosynthesis leading to the accumulation of several alkaloids, including ajmaline, an important plant-derived pharmaceutical used in the treatment of heart disorders. The sequence is that of Raucaffricine-O-beta-D-glucosidase from Rauvolfia serpentina (Serpentine wood).